We begin with the raw amino-acid sequence, 154 residues long: Superoxide dismutase [Cu-Zn] (154 aa).

Lys19 is covalently cross-linked (Glycyl lysine isopeptide (Lys-Gly) (interchain with G-Cter in SUMO)). 2 positions are modified to phosphoserine: Ser26 and Ser39. Glu43 is a Zn(2+) binding site. Positions 47, 49, and 64 each coordinate Cu cation. Cys58 and Cys147 form a disulfide bridge. His64 contributes to the Zn(2+) binding site. Lys70 participates in a covalent cross-link: Glycyl lysine isopeptide (Lys-Gly) (interchain with G-Cter in SUMO). Zn(2+)-binding residues include His72, His81, and Asp84. 2 positions are modified to phosphoserine: Ser99 and Ser117. His121 lines the Cu cation pocket. 2 positions are modified to phosphothreonine: Thr132 and Thr138. Arg144 contributes to the substrate binding site.

The protein belongs to the Cu-Zn superoxide dismutase family. In terms of assembly, homodimer in holo form. In apo form, heterodimer with CCS1. Zinc-binding at 'His-16' of CCS1 and Glu-43 of apo-SOD1 is required for this heterodimerization. Requires Cu cation as cofactor. It depends on Zn(2+) as a cofactor.

The protein localises to the cytoplasm. It localises to the mitochondrion intermembrane space. It catalyses the reaction 2 superoxide + 2 H(+) = H2O2 + O2. Its function is as follows. Destroys radicals which are normally produced within the cells and which are toxic to biological systems. This chain is Superoxide dismutase [Cu-Zn], found in Saccharomyces cerevisiae (strain ATCC 204508 / S288c) (Baker's yeast).